Reading from the N-terminus, the 338-residue chain is Ornithine carbamoyltransferase (338 aa).

Carbamoyl phosphate is bound by residues serine 56–threonine 59, arginine 107, and histidine 134–glutamine 137. L-ornithine contacts are provided by residues asparagine 168, aspartate 232, and serine 236–methionine 237. Residues cysteine 274–leucine 275 and arginine 320 each bind carbamoyl phosphate.

Belongs to the aspartate/ornithine carbamoyltransferase superfamily. OTCase family.

The protein localises to the cytoplasm. The enzyme catalyses carbamoyl phosphate + L-ornithine = L-citrulline + phosphate + H(+). Its pathway is amino-acid degradation; L-arginine degradation via ADI pathway; carbamoyl phosphate from L-arginine: step 2/2. Its function is as follows. Reversibly catalyzes the transfer of the carbamoyl group from carbamoyl phosphate (CP) to the N(epsilon) atom of ornithine (ORN) to produce L-citrulline. This is Ornithine carbamoyltransferase from Buchnera aphidicola subsp. Acyrthosiphon pisum (strain 5A).